Here is a 253-residue protein sequence, read N- to C-terminus: DNA repair protein RecO (253 aa).

Belongs to the RecO family.

Its function is as follows. Involved in DNA repair and RecF pathway recombination. This chain is DNA repair protein RecO, found in Dehalococcoides mccartyi (strain ATCC BAA-2266 / KCTC 15142 / 195) (Dehalococcoides ethenogenes (strain 195)).